Here is a 415-residue protein sequence, read N- to C-terminus: Corticotropin-releasing factor receptor 1 (415 aa).

Residues 1-23 form the signal peptide; the sequence is MGRRPQLRLVKALLLLGLNSISA. At 24-111 the chain is on the extracellular side; it reads SLQDQHCESL…CQEILSEGEK (88 aa). Disulfide bonds link cysteine 30-cysteine 54, cysteine 44-cysteine 87, and cysteine 68-cysteine 102. Residues asparagine 38, asparagine 45, asparagine 51, asparagine 78, asparagine 90, and asparagine 98 are each glycosylated (N-linked (GlcNAc...) asparagine). The important for peptide agonist binding stretch occupies residues 99 to 108; that stretch reads HSECQEILSE. The chain crosses the membrane as a helical span at residues 112–142; the sequence is SKAHYHIAVIINYLGHCISLAALLVAFVLFL. The Cytoplasmic portion of the chain corresponds to 143 to 149; that stretch reads RLRSIRC. A helical transmembrane segment spans residues 150–174; that stretch reads VRNIIHWNLISAFILRNATWFVVQL. Over 175–189 the chain is Extracellular; it reads TMSPEVHQSNVGWCR. The cysteines at positions 188 and 258 are disulfide-linked. The chain crosses the membrane as a helical span at residues 190–218; that stretch reads LVTAAYNYFHVTNFFWMFGEGCYLHTAVV. Topologically, residues 219–225 are cytoplasmic; that stretch reads LTYSTDR. A helical transmembrane segment spans residues 226–253; it reads LRKWMFICIGWGVPFPIIVAWAIGKLYY. The Extracellular portion of the chain corresponds to 254-269; sequence DNEKCWFGKRPGVYTD. A helical transmembrane segment spans residues 270-295; it reads YIYQGPMILVLLINFIFLFNIVRILM. Residues 280–290 are important for antagonist binding; the sequence is LLINFIFLFNI. Residues 296–306 are Cytoplasmic-facing; the sequence is TKLRASTTSET. Serine 301 carries the post-translational modification Phosphoserine; by PKA. A helical transmembrane segment spans residues 307-331; that stretch reads IQYRKAVKATLVLLPLLGITYMLFF. At 332 to 338 the chain is on the extracellular side; it reads VNPGEDE. The chain crosses the membrane as a helical span at residues 339-368; it reads VSRVVFIYFNSFLESFQGFFVSVFYCFLNS. Residues 369–415 lie on the Cytoplasmic side of the membrane; it reads EVRSAIRKRWHRWQDKHSIRARVARAMSIPTSPTRVSFHSIKQSTAV.

This sequence belongs to the G-protein coupled receptor 2 family. Heterodimer; heterodimerizes with GPER1. Interacts (via N-terminal extracellular domain) with CRH and UCN. Interacts with DLG1; this inhibits endocytosis of CRHR1 after agonist binding. Post-translationally, C-terminal Ser or Thr residues may be phosphorylated. Phosphorylation at Ser-301 by PKA prevents maximal coupling to Gq-protein, and thereby negatively regulates downstream signaling.

It is found in the cell membrane. Its subcellular location is the endosome. G-protein coupled receptor for CRH (corticotropin-releasing factor) and UCN (urocortin). Has high affinity for CRH and UCN. Ligand binding causes a conformation change that triggers signaling via guanine nucleotide-binding proteins (G proteins) and down-stream effectors, such as adenylate cyclase. Promotes the activation of adenylate cyclase, leading to increased intracellular cAMP levels. Inhibits the activity of the calcium channel CACNA1H. Required for normal embryonic development of the adrenal gland and for normal hormonal responses to stress. Plays a role in the response to anxiogenic stimuli. In Ovis aries (Sheep), this protein is Corticotropin-releasing factor receptor 1 (CRHR1).